Reading from the N-terminus, the 201-residue chain is Large ribosomal subunit protein uL4 (201 aa).

Residues 45–71 form a disordered region; sequence AQKTRAEVTGSGKKPWRQKGTGRARAG.

The protein belongs to the universal ribosomal protein uL4 family. In terms of assembly, part of the 50S ribosomal subunit.

Functionally, one of the primary rRNA binding proteins, this protein initially binds near the 5'-end of the 23S rRNA. It is important during the early stages of 50S assembly. It makes multiple contacts with different domains of the 23S rRNA in the assembled 50S subunit and ribosome. Forms part of the polypeptide exit tunnel. The sequence is that of Large ribosomal subunit protein uL4 from Shewanella halifaxensis (strain HAW-EB4).